The primary structure comprises 282 residues: Light-independent protochlorophyllide reductase iron-sulfur ATP-binding protein (282 aa).

Residues 10–15 and lysine 39 contribute to the ATP site; that span reads GIGKST. Residue serine 14 coordinates Mg(2+). Cysteine 95 and cysteine 129 together coordinate [4Fe-4S] cluster. 180-181 provides a ligand contact to ATP; the sequence is NR.

The protein belongs to the NifH/BchL/ChlL family. As to quaternary structure, homodimer. Protochlorophyllide reductase is composed of three subunits; ChlL, ChlN and ChlB. Requires [4Fe-4S] cluster as cofactor.

The protein localises to the plastid. It is found in the cyanelle. The catalysed reaction is chlorophyllide a + oxidized 2[4Fe-4S]-[ferredoxin] + 2 ADP + 2 phosphate = protochlorophyllide a + reduced 2[4Fe-4S]-[ferredoxin] + 2 ATP + 2 H2O. It functions in the pathway porphyrin-containing compound metabolism; chlorophyll biosynthesis (light-independent). Functionally, component of the dark-operative protochlorophyllide reductase (DPOR) that uses Mg-ATP and reduced ferredoxin to reduce ring D of protochlorophyllide (Pchlide) to form chlorophyllide a (Chlide). This reaction is light-independent. The L component serves as a unique electron donor to the NB-component of the complex, and binds Mg-ATP. The sequence is that of Light-independent protochlorophyllide reductase iron-sulfur ATP-binding protein from Cyanophora paradoxa.